Here is a 219-residue protein sequence, read N- to C-terminus: NAD(P)H-quinone oxidoreductase subunit I (219 aa).

2 consecutive 4Fe-4S ferredoxin-type domains span residues 55 to 84 and 95 to 124; these read GRIH…VDWV and RNYS…MTEE. Residues Cys-64, Cys-67, Cys-70, Cys-74, Cys-104, Cys-107, Cys-110, and Cys-114 each coordinate [4Fe-4S] cluster. Residues 192-219 form a disordered region; that stretch reads LKAAGSMKAAEDERESSSSASNMEESAG. Low complexity predominate over residues 208–219; the sequence is SSSASNMEESAG.

The protein belongs to the complex I 23 kDa subunit family. As to quaternary structure, NDH-1 is composed of at least 11 different subunits. [4Fe-4S] cluster serves as cofactor.

Its subcellular location is the cellular thylakoid membrane. The catalysed reaction is a plastoquinone + NADH + (n+1) H(+)(in) = a plastoquinol + NAD(+) + n H(+)(out). It carries out the reaction a plastoquinone + NADPH + (n+1) H(+)(in) = a plastoquinol + NADP(+) + n H(+)(out). Its function is as follows. NDH-1 shuttles electrons from an unknown electron donor, via FMN and iron-sulfur (Fe-S) centers, to quinones in the respiratory and/or the photosynthetic chain. The immediate electron acceptor for the enzyme in this species is believed to be plastoquinone. Couples the redox reaction to proton translocation, and thus conserves the redox energy in a proton gradient. This is NAD(P)H-quinone oxidoreductase subunit I from Synechococcus sp. (strain CC9311).